The chain runs to 366 residues: Ribosomal RNA large subunit methyltransferase M (366 aa).

Residues S188, 221–224, D240, D260, and D277 each bind S-adenosyl-L-methionine; that span reads CPGG. K306 acts as the Proton acceptor in catalysis.

This sequence belongs to the class I-like SAM-binding methyltransferase superfamily. RNA methyltransferase RlmE family. RlmM subfamily. In terms of assembly, monomer.

The protein localises to the cytoplasm. The enzyme catalyses cytidine(2498) in 23S rRNA + S-adenosyl-L-methionine = 2'-O-methylcytidine(2498) in 23S rRNA + S-adenosyl-L-homocysteine + H(+). Catalyzes the 2'-O-methylation at nucleotide C2498 in 23S rRNA. The polypeptide is Ribosomal RNA large subunit methyltransferase M (Cronobacter sakazakii (strain ATCC BAA-894) (Enterobacter sakazakii)).